The following is a 483-amino-acid chain: GDP-fucose protein O-fucosyltransferase 4 (483 aa).

Met-1 is a topological domain (cytoplasmic). Residues 2-21 (ALCLWLFLVLPICCWCQGAV) traverse the membrane as a helical; Signal-anchor for type II membrane protein segment. Residues 22–483 (DLGDSGVFQP…RARGLSNDSR (462 aa)) are Lumenal-facing. Asn-151 and Asn-303 each carry an N-linked (GlcNAc...) asparagine glycan. A disulfide bridge links Cys-374 with Cys-377. Positions 387–425 (RKAHRKNPKQNQPPQPKMANSSHMGCPLPSPGYGPVENV) are disordered. 4 N-linked (GlcNAc...) asparagine glycosylation sites follow: Asn-406, Asn-428, Asn-456, and Asn-480.

Belongs to the glycosyltransferase 10 family.

The protein resides in the endoplasmic reticulum membrane. It catalyses the reaction L-threonyl-[protein] + GDP-beta-L-fucose = 3-O-(alpha-L-fucosyl)-L-threonyl-[protein] + GDP + H(+). The enzyme catalyses L-seryl-[protein] + GDP-beta-L-fucose = 3-O-(alpha-L-fucosyl)-L-seryl-[protein] + GDP + H(+). Its pathway is protein modification; protein glycosylation. Functionally, protein O-fucosyltransferase that specifically catalyzes O-fucosylation of serine or threonine residues in EMI domains of target proteins. Attaches fucose through an O-glycosidic linkage. O-fucosylation of EMI domain-containing proteins may be required for facilitating protein folding and secretion. The sequence is that of GDP-fucose protein O-fucosyltransferase 4 (fut11) from Danio rerio (Zebrafish).